Consider the following 219-residue polypeptide: Ribose-5-phosphate isomerase A (219 aa).

Substrate contacts are provided by residues 28–31 (TGST), 81–84 (DGAD), and 94–97 (KGGG). Glu-103 serves as the catalytic Proton acceptor. Residue Lys-121 coordinates substrate.

The protein belongs to the ribose 5-phosphate isomerase family. As to quaternary structure, homodimer.

The catalysed reaction is aldehydo-D-ribose 5-phosphate = D-ribulose 5-phosphate. The protein operates within carbohydrate degradation; pentose phosphate pathway; D-ribose 5-phosphate from D-ribulose 5-phosphate (non-oxidative stage): step 1/1. In terms of biological role, catalyzes the reversible conversion of ribose-5-phosphate to ribulose 5-phosphate. The chain is Ribose-5-phosphate isomerase A from Nitrosomonas europaea (strain ATCC 19718 / CIP 103999 / KCTC 2705 / NBRC 14298).